The chain runs to 282 residues: Serine/arginine-rich splicing factor 8 (282 aa).

S2 carries the N-acetylserine modification. Residues S2 and S26 each carry the phosphoserine modification. The 79-residue stretch at 14–92 folds into the RRM domain; that stretch reads ITLKVDNLTY…RELRVQVARY (79 aa). Positions 91–282 are disordered; that stretch reads RYGRRDLPRS…SPEEEGQMSS (192 aa). A compositionally biased stretch (basic and acidic residues) spans 93-107; that stretch reads GRRDLPRSRQGEPRG. Composition is skewed to basic residues over residues 116–136 and 144–154; these read RRSR…RSRS and SRSRSRYRGSR. Composition is skewed to low complexity over residues 155–177 and 185–200; these read YSRS…PYSR and YGGS…NSRY. 5 positions are modified to phosphoserine: S156, S158, S171, S173, and S196. Basic residues predominate over residues 201–210; that stretch reads SRYHSSRSHS. Composition is skewed to low complexity over residues 211-227 and 234-255; these read KSGS…SKSS and SSSV…SPPR. Positions 256–271 are enriched in basic residues; it reads VSKRKSKSRSRSKRPP. S273 is subject to Phosphoserine.

This sequence belongs to the splicing factor SR family. In terms of tissue distribution, strongly expressed in pancreas, spleen and prostate. Weakly expressed in lung, liver and thymus.

Its subcellular location is the nucleus. Functionally, involved in pre-mRNA alternative splicing. The protein is Serine/arginine-rich splicing factor 8 (SRSF8) of Homo sapiens (Human).